The following is a 1033-amino-acid chain: PDZ domain-containing protein 7 (1033 aa).

PDZ domains are found at residues Ser86 to Arg168 and Ile210 to Arg293. Residues Glu323–Ser344 are compositionally biased toward low complexity. 4 disordered regions span residues Glu323–Val380, Lys444–Ser464, Glu754–Thr864, and Met943–Pro1033. Residues Ala770–Ser784 show a composition bias toward basic residues. Residues Ser785–Pro797 are compositionally biased toward low complexity. In terms of domain architecture, PDZ 3 spans Thr862 to Ala934. The span at Pro991 to Pro1000 shows a compositional bias: pro residues.

In terms of assembly, homodimerizes (via PDZ2 domain). Component of USH2 complex, composed of ADGRV1, PDZD7, USH2A and WHRN. Interacts (via PDZ domains) with WHRN; the interaction is direct. Interacts with USH1G. Interacts with ADGRV1 (via the cytoplasmic region). Interacts with USH2A (via the cytoplasmic region). Interacts with MYO7A (via MyTH4-FERM domains). As to expression, weakly expressed in the inner ear. Expressed in the retinal pigment epithelium.

Its subcellular location is the cell projection. It is found in the cilium. It localises to the nucleus. The protein localises to the stereocilium. Its function is as follows. In cochlear developing hair cells, essential in organizing the USH2 complex at stereocilia ankle links. Blocks inhibition of adenylate cyclase activity mediated by ADGRV1. The sequence is that of PDZ domain-containing protein 7 from Homo sapiens (Human).